We begin with the raw amino-acid sequence, 638 residues long: MSDKSELKAELERKKQRLAQIREEKKRKEEERKKKETDQKKEAVAPVQEESDLEKKRREAEALLQSMGLTPESPIVFSEYWVPPPMSPSSKSVSTPSEAGSQDSGDGAVGSRTLHWDTDPSVLQLHSDSDLGRGPIKLGMAKITQVDFPPREIVTYTKETQTPVMAQPKEDEEEDDDVVAPKPPIEPEEEKTLKKDEENDSKAPPHELTEEEKQQILHSEEFLSFFDHSTRIVERALSEQINIFFDYSGRDLEDKEGEIQAGAKLSLNRQFFDERWSKHRVVSCLDWSSQYPELLVASYNNNEDAPHEPDGVALVWNMKYKKTTPEYVFHCQSAVMSATFAKFHPNLVVGGTYSGQIVLWDNRSNKRTPVQRTPLSAAAHTHPVYCVNVVGTQNAHNLISISTDGKICSWSLDMLSHPQDSMELVHKQSKAVAVTSMSFPVGDVNNFVVGSEEGSVYTACRHGSKAGISEMFEGHQGPITGIHCHAAVGAVDFSHLFVTSSFDWTVKLWTTKNNKPLYSFEDNADYVYDVMWSPTHPALFACVDGMGRLDLWNLNNDTEVPTASISVEGNPALNRVRWTHSGREIAVGDSEGQIVIYDVGEQIAVPRNDEWARFGRTLAEINANRADAEEEAATRIPA.

Composition is skewed to basic and acidic residues over residues methionine 1 to arginine 13 and glutamine 20 to alanine 43. 2 disordered regions span residues methionine 1–proline 135 and threonine 155–glutamine 214. Position 2 is an N-acetylserine (serine 2). Position 51 is a diphosphoserine (serine 51). Phosphoserine occurs at positions 51, 73, 81, 84, and 90. The segment covering proline 88–serine 97 has biased composition (low complexity). A Phosphothreonine modification is found at threonine 95. Phosphoserine is present on residues serine 97, serine 101, and serine 104. Basic and acidic residues predominate over residues glutamate 190–glutamine 214. WD repeat units follow at residues serine 277–glutamate 326, histidine 330–valine 370, alanine 379–aspartate 420, serine 429–serine 469, glycine 474–serine 519, aspartate 522–threonine 562, and glutamate 568–arginine 607.

It belongs to the dynein intermediate chain family. Homodimer. The cytoplasmic dynein 1 complex consists of two catalytic heavy chains (HCs) and a number of non-catalytic subunits presented by intermediate chains (ICs), light intermediate chains (LICs) and light chains (LCs); the composition seems to vary in respect to the IC, LIC and LC composition. The heavy chain homodimer serves as a scaffold for the probable homodimeric assembly of the respective non-catalytic subunits. The ICs and LICs bind directly to the HC dimer and the LCs assemble on the IC dimer. Interacts with DYNLT3. Interacts with DYNLT1. Interacts (dephosphorylated at Ser-90) with DCTN1. Interacts with BICD2. Interacts with SPEF2. Interacts with CFAP61. In terms of assembly, (Microbial infection) Interacts with human adenovirus 5 hexon protein; this interaction probably allows virus intracellular transport. Post-translationally, the phosphorylation status of Ser-90 appears to be involved in dynactin-dependent target binding. Pyrophosphorylation by 5-diphosphoinositol pentakisphosphate (5-IP7) promotes interaction with DCTN1. Serine pyrophosphorylation is achieved by Mg(2+)-dependent, but enzyme independent transfer of a beta-phosphate from a inositol pyrophosphate to a pre-phosphorylated serine residue.

The protein resides in the cytoplasm. It is found in the cytoskeleton. Acts as one of several non-catalytic accessory components of the cytoplasmic dynein 1 complex that are thought to be involved in linking dynein to cargos and to adapter proteins that regulate dynein function. Cytoplasmic dynein 1 acts as a motor for the intracellular retrograde motility of vesicles and organelles along microtubules. The intermediate chains mediate the binding of dynein to dynactin via its 150 kDa component (p150-glued) DCTN1. Involved in membrane-transport, such as Golgi apparatus, late endosomes and lysosomes. This chain is Cytoplasmic dynein 1 intermediate chain 2, found in Homo sapiens (Human).